The chain runs to 338 residues: Large ribosomal subunit protein uL10 (338 aa).

The interval 292–338 (LDDDLKERVSSTASAVEAKEEEAPKEEKEEEKEEEEEAPAAGLGMLF) is disordered. The segment covering 308-318 (EAKEEEAPKEE) has biased composition (basic and acidic residues). Residues 319-329 (KEEEKEEEEEA) are compositionally biased toward acidic residues.

It belongs to the universal ribosomal protein uL10 family. Part of the 50S ribosomal subunit. Forms part of the ribosomal stalk which helps the ribosome interact with GTP-bound translation factors. Forms a heptameric L10(L12)2(L12)2(L12)2 complex, where L10 forms an elongated spine to which the L12 dimers bind in a sequential fashion.

In terms of biological role, forms part of the ribosomal stalk, playing a central role in the interaction of the ribosome with GTP-bound translation factors. This is Large ribosomal subunit protein uL10 from Methanococcus aeolicus (strain ATCC BAA-1280 / DSM 17508 / OCM 812 / Nankai-3).